A 263-amino-acid chain; its full sequence is Small ribosomal subunit protein uS2 (263 aa).

It belongs to the universal ribosomal protein uS2 family. As to quaternary structure, component of the small ribosomal subunit. Mature ribosomes consist of a small (40S) and a large (60S) subunit. The 40S subunit contains about 33 different proteins and 1 molecule of RNA (18S). The 60S subunit contains about 49 different proteins and 3 molecules of RNA (25S, 5.8S and 5S). Interacts with RPS21.

Its subcellular location is the cytoplasm. Functionally, required for the assembly and/or stability of the 40S ribosomal subunit. Required for the processing of the 20S rRNA-precursor to mature 18S rRNA in a late step of the maturation of 40S ribosomal subunits. This is Small ribosomal subunit protein uS2 from Vairimorpha ceranae (strain BRL01) (Microsporidian parasite).